The following is a 216-amino-acid chain: NKG2-D type II integral membrane protein (216 aa).

Residues 1–51 (MGWIRGRRSRHSWEMSEFHNYNLDLKKSDFSTRWQKQRCPVVKSKCRENAS) are Cytoplasmic-facing. The helical; Signal-anchor for type II membrane protein transmembrane segment at 52–72 (PFFFCCFIAVAMGIRFIIMVT) threads the bilayer. Residues 73 to 216 (IWSAVFLNSL…NTYICMQRTV (144 aa)) lie on the Extracellular side of the membrane. Disulfide bonds link Cys-96–Cys-105 and Cys-99–Cys-110. One can recognise a C-type lectin domain in the interval 98 to 213 (PCPKNWICYK…STPNTYICMQ (116 aa)). 4 N-linked (GlcNAc...) asparagine glycosylation sites follow: Asn-115, Asn-131, Asn-163, and Asn-202. Intrachain disulfides connect Cys-127–Cys-211 and Cys-189–Cys-203.

As to quaternary structure, homodimer; disulfide-linked. Heterohexamer composed of two subunits of KLRK1 and four subunits of HCST/DAP10. Interacts (via transmembrane domain) with HCST/DAP10 (via transmembrane domain); the interaction is required for KLRK1 NK cell surface and induces NK cell-mediated cytotoxicity. Can form disulfide-bonded heterodimer with CD94. Interacts with CEACAM1; recruits PTPN6 that dephosphorylates VAV1. Natural killer cells.

Its subcellular location is the cell membrane. Its function is as follows. Functions as an activating and costimulatory receptor involved in immunosurveillance upon binding to various cellular stress-inducible ligands displayed at the surface of autologous tumor cells and virus-infected cells. Provides both stimulatory and costimulatory innate immune responses on activated killer (NK) cells, leading to cytotoxic activity. Acts as a costimulatory receptor for T-cell receptor (TCR) in CD8(+) T-cell-mediated adaptive immune responses by amplifying T-cell activation. Stimulates perforin-mediated elimination of ligand-expressing tumor cells. Signaling involves calcium influx, culminating in the expression of TNF-alpha. Participates in NK cell-mediated bone marrow graft rejection. May play a regulatory role in differentiation and survival of NK cells. Binds to ligands belonging to various subfamilies of MHC class I-related glycoproteins. This is NKG2-D type II integral membrane protein (KLRK1) from Pan troglodytes (Chimpanzee).